The chain runs to 357 residues: tRNA/tmRNA (uracil-C(5))-methyltransferase (357 aa).

Positions 180, 209, 214, 230, and 290 each coordinate S-adenosyl-L-methionine. Residue cysteine 315 is the Nucleophile of the active site. Residue glutamate 349 is the Proton acceptor of the active site.

Belongs to the class I-like SAM-binding methyltransferase superfamily. RNA M5U methyltransferase family. TrmA subfamily.

It carries out the reaction uridine(54) in tRNA + S-adenosyl-L-methionine = 5-methyluridine(54) in tRNA + S-adenosyl-L-homocysteine + H(+). It catalyses the reaction uridine(341) in tmRNA + S-adenosyl-L-methionine = 5-methyluridine(341) in tmRNA + S-adenosyl-L-homocysteine + H(+). Dual-specificity methyltransferase that catalyzes the formation of 5-methyluridine at position 54 (m5U54) in all tRNAs, and that of position 341 (m5U341) in tmRNA (transfer-mRNA). The protein is tRNA/tmRNA (uracil-C(5))-methyltransferase of Campylobacter jejuni subsp. jejuni serotype O:23/36 (strain 81-176).